A 983-amino-acid polypeptide reads, in one-letter code: Probable beta-galactosidase C (983 aa).

Residues 1–23 form the signal peptide; the sequence is MRIFSFLFLLLLGILTGQGLVSG. 5 residues coordinate substrate: tyrosine 82, asparagine 127, alanine 128, glutamate 129, and asparagine 187. Glutamate 188 functions as the Proton donor in the catalytic mechanism. N-linked (GlcNAc...) asparagine glycosylation occurs at asparagine 197. Tyrosine 251 is a substrate binding site. Residues cysteine 257 and cysteine 304 are joined by a disulfide bond. N-linked (GlcNAc...) asparagine glycosylation occurs at asparagine 276. The active-site Nucleophile is the glutamate 287. Tyrosine 353 contributes to the substrate binding site. Asparagine 391, asparagine 434, asparagine 466, asparagine 516, asparagine 601, asparagine 676, asparagine 714, asparagine 719, asparagine 758, and asparagine 804 each carry an N-linked (GlcNAc...) asparagine glycan.

It belongs to the glycosyl hydrolase 35 family.

It localises to the secreted. It catalyses the reaction Hydrolysis of terminal non-reducing beta-D-galactose residues in beta-D-galactosides.. In terms of biological role, cleaves beta-linked terminal galactosyl residues from gangliosides, glycoproteins, and glycosaminoglycans. The sequence is that of Probable beta-galactosidase C (lacC) from Aspergillus fumigatus (strain CBS 144.89 / FGSC A1163 / CEA10) (Neosartorya fumigata).